Reading from the N-terminus, the 94-residue chain is Large ribosomal subunit protein uL23 (94 aa).

It belongs to the universal ribosomal protein uL23 family. Part of the 50S ribosomal subunit. Contacts protein L29, and trigger factor when it is bound to the ribosome.

In terms of biological role, one of the early assembly proteins it binds 23S rRNA. One of the proteins that surrounds the polypeptide exit tunnel on the outside of the ribosome. Forms the main docking site for trigger factor binding to the ribosome. The sequence is that of Large ribosomal subunit protein uL23 from Roseiflexus castenholzii (strain DSM 13941 / HLO8).